The sequence spans 492 residues: Endoglycoceramidase I (492 aa).

A signal peptide spans 1–14 (MRKTVVAFAAAIAA). Cys-15 is lipidated: N-palmitoyl cysteine. The S-diacylglycerol cysteine moiety is linked to residue Cys-15. Substrate-binding positions include Lys-61, Asp-62, 131–133 (HQD), and 213–214 (NE). Glu-214 acts as the Proton donor in catalysis. Cys-224 and Cys-229 form a disulfide bridge. Positions 265, 298, and 302 each coordinate substrate. Cys-294 and Cys-313 are oxidised to a cystine. Glu-339 functions as the Nucleophile in the catalytic mechanism. Trp-365 contributes to the substrate binding site. Residues 467–492 (NRPGSAGAEVPDGPIETSSSGSSGSS) are disordered.

The protein belongs to the glycosyl hydrolase 5 (cellulase A) family.

It is found in the secreted. It localises to the membrane. It carries out the reaction an oligoglycosyl-(1-&gt;4)-beta-D-glucosyl-(1&lt;-&gt;1)-ceramide + H2O = an oligoglycosyl-(1-&gt;4)-D-glucose + an N-acyl-sphingoid base. It catalyses the reaction a ganglioside GM3 + H2O = N-acetyl-alpha-neuraminosyl-(2-&gt;3)-beta-D-galactosyl-(1-&gt;4)-D-glucose + an N-acyl-sphingoid base. The catalysed reaction is a ganglioside GM1 + H2O = beta-D-Gal-(1-&gt;3)-beta-D-GalNAc-(1-&gt;4)-[alpha-Neu5Ac-(2-&gt;3)]-beta-D-Gal-(1-&gt;4)-D-Glc + an N-acyl-sphingoid base. The enzyme catalyses a ganglioside Fuc-GM1 + H2O = alpha-Fuc-(1-&gt;2)-beta-Gal-(1-&gt;3)-beta-GalNAc-(1-&gt;4)-[alpha-Neu5Ac-(2-&gt;3)]-beta-Gal-(1-&gt;4)-Glc + an N-acyl-sphingoid base. It carries out the reaction a beta-D-galactosyl-(1-&gt;4)-beta-D-glucosyl-(1&lt;-&gt;1)-ceramide + H2O = lactose + an N-acyl-sphingoid base. Functionally, hydrolyzes glycosphingolipids; exhibits broad substrate specificity including monosialodihexosylganglioside (GM3), monosialotetrahexosylganglioside (GM1), fucosyl-GM1, lactosylceramide, globotriosylceramide, globotetraosylceramide, ganglioside GD1a, and ganglioside GD1b. No activity towards glucosylceramide and galactosylceramide. This is Endoglycoceramidase I from Rhodococcus hoagii (strain 103S) (Rhodococcus equi).